The chain runs to 259 residues: Cytochrome c oxidase subunit 3 (259 aa).

The next 7 membrane-spanning stretches (helical) occupy residues 13–33 (PWPLTSSIGAFTLAIGLASWF), 36–56 (HGFLCLTLAAFLIIVSMIQWW), 80–100 (GMILFITSEVMFFLAFFWAFF), 125–145 (FSVPLLNTAVLLASGVTVTWA), 160–180 (ALILTVCLGAYFTFLQAGEYM), 195–215 (FFVATGFHGLHVLIGSSFLAI), and 237–257 (AWYWHFVDVVWICLYLCIYWW).

It belongs to the cytochrome c oxidase subunit 3 family. Component of the cytochrome c oxidase (complex IV, CIV), a multisubunit enzyme composed of a catalytic core of 3 subunits and several supernumerary subunits. The complex exists as a monomer or a dimer and forms supercomplexes (SCs) in the inner mitochondrial membrane with ubiquinol-cytochrome c oxidoreductase (cytochrome b-c1 complex, complex III, CIII).

It localises to the mitochondrion inner membrane. It catalyses the reaction 4 Fe(II)-[cytochrome c] + O2 + 8 H(+)(in) = 4 Fe(III)-[cytochrome c] + 2 H2O + 4 H(+)(out). Functionally, component of the cytochrome c oxidase, the last enzyme in the mitochondrial electron transport chain which drives oxidative phosphorylation. The respiratory chain contains 3 multisubunit complexes succinate dehydrogenase (complex II, CII), ubiquinol-cytochrome c oxidoreductase (cytochrome b-c1 complex, complex III, CIII) and cytochrome c oxidase (complex IV, CIV), that cooperate to transfer electrons derived from NADH and succinate to molecular oxygen, creating an electrochemical gradient over the inner membrane that drives transmembrane transport and the ATP synthase. Cytochrome c oxidase is the component of the respiratory chain that catalyzes the reduction of oxygen to water. Electrons originating from reduced cytochrome c in the intermembrane space (IMS) are transferred via the dinuclear copper A center (CU(A)) of subunit 2 and heme A of subunit 1 to the active site in subunit 1, a binuclear center (BNC) formed by heme A3 and copper B (CU(B)). The BNC reduces molecular oxygen to 2 water molecules using 4 electrons from cytochrome c in the IMS and 4 protons from the mitochondrial matrix. This Lumbricus terrestris (Common earthworm) protein is Cytochrome c oxidase subunit 3 (COIII).